We begin with the raw amino-acid sequence, 161 residues long: Large ribosomal subunit protein mL50 (161 aa).

Residues 27–51 (WGGHSKKEEKEVEENSIIPQEKKEP) are disordered.

Belongs to the mitochondrion-specific ribosomal protein mL50 family. As to quaternary structure, component of the mitochondrial ribosome large subunit (39S) which comprises a 16S rRNA and about 50 distinct proteins.

The protein localises to the mitochondrion. This Gallus gallus (Chicken) protein is Large ribosomal subunit protein mL50 (MRPL50).